The sequence spans 701 residues: Glycine--tRNA ligase beta subunit (701 aa).

It belongs to the class-II aminoacyl-tRNA synthetase family. As to quaternary structure, tetramer of two alpha and two beta subunits.

The protein localises to the cytoplasm. The enzyme catalyses tRNA(Gly) + glycine + ATP = glycyl-tRNA(Gly) + AMP + diphosphate. This Anaeromyxobacter dehalogenans (strain 2CP-1 / ATCC BAA-258) protein is Glycine--tRNA ligase beta subunit.